Consider the following 151-residue polypeptide: Transcriptional regulator MraZ (151 aa).

SpoVT-AbrB domains are found at residues 5 to 51 (AHEL…PVAE) and 81 to 124 (AEIL…GREQ).

It belongs to the MraZ family. As to quaternary structure, forms oligomers.

The protein localises to the cytoplasm. It is found in the nucleoid. This is Transcriptional regulator MraZ from Neisseria meningitidis serogroup A / serotype 4A (strain DSM 15465 / Z2491).